The sequence spans 1358 residues: DNA-directed RNA polymerase subunit beta (1358 aa).

Belongs to the RNA polymerase beta chain family. As to quaternary structure, the RNAP catalytic core consists of 2 alpha, 1 beta, 1 beta' and 1 omega subunit. When a sigma factor is associated with the core the holoenzyme is formed, which can initiate transcription.

The catalysed reaction is RNA(n) + a ribonucleoside 5'-triphosphate = RNA(n+1) + diphosphate. DNA-dependent RNA polymerase catalyzes the transcription of DNA into RNA using the four ribonucleoside triphosphates as substrates. The chain is DNA-directed RNA polymerase subunit beta from Francisella tularensis subsp. novicida (strain U112).